A 501-amino-acid chain; its full sequence is Neuronal acetylcholine receptor subunit beta-2 (501 aa).

A signal peptide spans 1 to 25 (MARCSNSMALLFSFGLLWLCSGVLG). Over 26–238 (TDTEERLVEH…IIRRKPLFYT (213 aa)) the chain is Extracellular. 2 N-linked (GlcNAc...) asparagine glycosylation sites follow: Asn-51 and Asn-168. A disulfide bridge connects residues Cys-155 and Cys-169. A helical transmembrane segment spans residues 239-259 (INLIIPCVLITSLAILVFYLP). The Cytoplasmic portion of the chain corresponds to 260–267 (SDCGEKMT). The chain crosses the membrane as a helical span at residues 268–288 (LCISVLLALTVFLLLISKIVP). The Extracellular segment spans residues 289–300 (PTSLDVPLVGKY). A helical transmembrane segment spans residues 301–321 (LMFTMVLVTFSIVTSVCVLNV). At 322–459 (HHRSPTTHTM…WKYVAMVIDR (138 aa)) the chain is on the cytoplasmic side. Residues 460 to 480 (LFLWIFVFVCVFGTIGMFLQP) form a helical membrane-spanning segment.

The protein belongs to the ligand-gated ion channel (TC 1.A.9) family. Acetylcholine receptor (TC 1.A.9.1) subfamily. Beta-2/CHRNB2 sub-subfamily. In terms of assembly, neuronal AChR is a heteropentamer composed of two different types of subunits: alpha and beta. CHRNB2/Beta-2 subunit can be combined to CHRNA2/alpha-2, CHRNA3/alpha-3 or CHRNA4/alpha-4, CHRNA5/alpha-5, CHRNA6/alpha-6 and CHRNB3/beta-3 to give rise to functional receptors. CHRNA2:CHRNB2 and CHRNA4:CHRNB2 nAChR complexes exist in two subtypes: LS (low agonist sensitivity) with a (CHRNA2/4)3:(CHRNB2)2 and HS (high agonist sensitivity) with a (CHRNA2/4)2:(CHRNB2)3 stoichiometry; the subtypes differ in their subunit binding interfaces which are involved in ligand binding. Cells produce predominantly an (CHRNA4)3:(CHRNB2)2 nAChR. The stoichiometric form (CHRNA4)2:(CHRNB2)3 expression is selectively up-regulated by nicotine and has lower single channel conductance and calcium permeability. Also part of the stoichiometric forms: (CHRNA4:CHRNB2)2:CHRNB3 or (CHRNA6:CHRNB2)2:CHRNB3. Can form heteropentamers with CHRNA7, mainly found in basal forebrain cholinergic neurons. Interacts with RIC3; which is required for proper folding and assembly. Interacts with LYPD6.

It localises to the synaptic cell membrane. Its subcellular location is the cell membrane. The catalysed reaction is K(+)(in) = K(+)(out). It carries out the reaction Na(+)(in) = Na(+)(out). The enzyme catalyses Ca(2+)(in) = Ca(2+)(out). Its activity is regulated as follows. Activated by a myriad of ligands such as acetylcholine, cytisine, nicotine, choline and epibatidine. Channel potentiation by calcium is stoichiometry-selective, CHRNA4:CHRNB2 nACh receptor is achieved by calcium association with topographically distinct sites framed by anionic residues within the CHRNA4 subunit and between the CHRNA4 and CHRNB2 subunits. Oligomeric amyloid-beta protein 42 activates specifially CHRNA7:CHRNB2 nAchRs. nAChR activity is inhibited by the antagonist alpha-conotoxins BuIA, PnIA, PnIC, GID and MII, small disulfide-constrained peptides from cone snails. Its function is as follows. Component of neuronal acetylcholine receptors (nAChRs) that function as pentameric, ligand-gated cation channels with high calcium permeability among other activities. nAChRs are excitatory neurotrasnmitter receptors formed by a collection of nAChR subunits known to mediate synaptic transmission in the nervous system and the neuromuscular junction. Each nAchR subunit confers differential attributes to channel properties, including activation, deactivation and desensitization kinetics, pH sensitivity, cation permeability, and binding to allosteric modulators. CHRNB2 forms heteropentameric neuronal acetylcholine receptors with CHRNA2, CHRNA3, CHRNA4 and CHRNA6, as well as CHRNA5 and CHRNB3 as accesory subunits. Found in two major stoichiometric forms,(CHRNA4)3:(CHRNB2)2 and (CHRNA4)2:(CHRNB2)3, the two stoichiometric forms differ in their unitary conductance, calcium permeability, ACh sensitivity and potentiation by divalent cation. Heteropentameric channels with CHRNA6 and CHRNA4 exhibit high sensitivity to ACh and nicotine and are predominantly expressed in only a few brain areas, including dopaminergic neurons, norepirephrine neurons and cells of the visual system. nAChrs containing CHRNA6 subunits mediate endogenous cholinergic modulation of dopamine and gamma-aminobutyric acid (GABA) release in response to nicotine at nerve terminals. Also forms functional nAChRs with other subunits such as CHRNA7:CHRNB2, mainly expressed in basal forebrain cholinergic neurons. The chain is Neuronal acetylcholine receptor subunit beta-2 (Chrnb2) from Mus musculus (Mouse).